Consider the following 398-residue polypeptide: Elongation factor Tu (398 aa).

The tr-type G domain occupies 10-207 (KPHVNIGTIG…TVDSYIPEPE (198 aa)). A G1 region spans residues 19-26 (GHVDHGKT). Position 19 to 26 (19 to 26 (GHVDHGKT)) interacts with GTP. Mg(2+) is bound at residue threonine 26. Positions 63–67 (GITIN) are G2. A G3 region spans residues 84-87 (DAPG). GTP is bound by residues 84 to 88 (DAPGH) and 139 to 142 (NKVD). The interval 139–142 (NKVD) is G4. The interval 177–179 (SAL) is G5.

It belongs to the TRAFAC class translation factor GTPase superfamily. Classic translation factor GTPase family. EF-Tu/EF-1A subfamily. As to quaternary structure, monomer.

Its subcellular location is the cytoplasm. The enzyme catalyses GTP + H2O = GDP + phosphate + H(+). Functionally, GTP hydrolase that promotes the GTP-dependent binding of aminoacyl-tRNA to the A-site of ribosomes during protein biosynthesis. The protein is Elongation factor Tu of Streptococcus pyogenes serotype M1.